The chain runs to 221 residues: UPF0758 protein YicR (221 aa).

One can recognise an MPN domain in the interval 99 to 221 (ALLSPEMTRE…YVSFAERGWI (123 aa)). Positions 170, 172, and 183 each coordinate Zn(2+). The JAMM motif signature appears at 170–183 (HNHPSGCAEPSKAD).

The protein belongs to the UPF0758 family. YicR subfamily.

This Salmonella agona (strain SL483) protein is UPF0758 protein YicR.